A 424-amino-acid polypeptide reads, in one-letter code: Dihydroorotase (424 aa).

Positions 60 and 62 each coordinate Zn(2+). Substrate-binding positions include 62–64 and Asn94; that span reads HFR. Zn(2+) is bound by residues Asp151, His178, and His231. A substrate-binding site is contributed by Asn277. Asp304 lines the Zn(2+) pocket. Asp304 is an active-site residue. His308 is a substrate binding site.

This sequence belongs to the metallo-dependent hydrolases superfamily. DHOase family. Class I DHOase subfamily. The cofactor is Zn(2+).

It catalyses the reaction (S)-dihydroorotate + H2O = N-carbamoyl-L-aspartate + H(+). It participates in pyrimidine metabolism; UMP biosynthesis via de novo pathway; (S)-dihydroorotate from bicarbonate: step 3/3. Catalyzes the reversible cyclization of carbamoyl aspartate to dihydroorotate. The sequence is that of Dihydroorotase from Clostridium acetobutylicum (strain ATCC 824 / DSM 792 / JCM 1419 / IAM 19013 / LMG 5710 / NBRC 13948 / NRRL B-527 / VKM B-1787 / 2291 / W).